The sequence spans 423 residues: Serine--tRNA ligase (423 aa).

The span at 1–12 (MIDLKALRENPD) shows a compositional bias: basic and acidic residues. The disordered stretch occupies residues 1-26 (MIDLKALRENPDVGRASQRSRGEDPE). 230-232 (TSE) contacts L-serine. ATP contacts are provided by residues 261–263 (RRE) and Val277. Residue Glu284 coordinates L-serine. 348–351 (ELTS) contacts ATP. Thr383 lines the L-serine pocket.

The protein belongs to the class-II aminoacyl-tRNA synthetase family. Type-1 seryl-tRNA synthetase subfamily. In terms of assembly, homodimer. The tRNA molecule binds across the dimer.

It is found in the cytoplasm. The enzyme catalyses tRNA(Ser) + L-serine + ATP = L-seryl-tRNA(Ser) + AMP + diphosphate + H(+). It catalyses the reaction tRNA(Sec) + L-serine + ATP = L-seryl-tRNA(Sec) + AMP + diphosphate + H(+). It functions in the pathway aminoacyl-tRNA biosynthesis; selenocysteinyl-tRNA(Sec) biosynthesis; L-seryl-tRNA(Sec) from L-serine and tRNA(Sec): step 1/1. In terms of biological role, catalyzes the attachment of serine to tRNA(Ser). Is also able to aminoacylate tRNA(Sec) with serine, to form the misacylated tRNA L-seryl-tRNA(Sec), which will be further converted into selenocysteinyl-tRNA(Sec). In Beutenbergia cavernae (strain ATCC BAA-8 / DSM 12333 / CCUG 43141 / JCM 11478 / NBRC 16432 / NCIMB 13614 / HKI 0122), this protein is Serine--tRNA ligase.